The chain runs to 1191 residues: Laminin subunit gamma-2 (1191 aa).

Residues Met1–Ala21 form the signal peptide. Intrachain disulfides connect Cys28-Cys37, Cys30-Cys53, Cys56-Cys65, Cys68-Cys81, Cys84-Cys96, Cys86-Cys102, Cys104-Cys113, Cys116-Cys128, Cys139-Cys150, Cys141-Cys155, Cys157-Cys166, and Cys169-Cys184. Laminin EGF-like domains are found at residues Cys28–Pro83, Cys84–Arg130, and Cys139–Gln186. Residues Cys187–Cys196 form the Laminin EGF-like 4; first part domain. In terms of domain architecture, Laminin IV type A spans Gln213–Arg381. N-linked (GlcNAc...) asparagine glycosylation is found at Asn342 and Asn362. One can recognise a Laminin EGF-like 4; second part domain in the interval Cys382 to Pro415. Laminin EGF-like domains lie at Cys416–Pro461, Cys462–Arg516, and Cys517–Ala572. 11 cysteine pairs are disulfide-bonded: Cys462-Cys470, Cys464-Cys481, Cys484-Cys493, Cys496-Cys514, Cys517-Cys531, Cys519-Cys538, Cys541-Cys550, Cys553-Cys570, Cys573-Cys585, Cys575-Cys591, and Cys593-Cys602. A glycan (N-linked (GlcNAc...) asparagine) is linked at Asn526. The Laminin EGF-like 8; truncated domain maps to Cys573–Cys602. Residues Arg586–Asp588 carry the Cell attachment site motif. Positions Asp603 to Gln1191 are domain II and I. Coiled-coil stretches lie at residues Ala612 to Leu710 and Leu759 to Asp786. O-linked (Xyl...) (chondroitin sulfate) serine glycosylation is present at Ser805. N-linked (GlcNAc...) asparagine glycosylation occurs at Asn941. The stretch at Glu946–Leu996 forms a coiled coil. The N-linked (GlcNAc...) asparagine glycan is linked to Asn1032. Positions Leu1139–Leu1178 form a coiled coil.

In terms of assembly, laminin is a complex glycoprotein, consisting of three different polypeptide chains (alpha, beta, gamma), which are bound to each other by disulfide bonds into a cross-shaped molecule comprising one long and three short arms with globules at each end. Gamma-2 is a subunit of laminin-5 (laminin-332 or epiligrin/kalinin/nicein). Binds to fibulin-1, fibulin-1c, fibulin-2 and nidogen. Post-translationally, O-glycosylated; contains chondroitin sulfate (CS). As to expression, epithelial cells of many tissues, particularly high levels in tongue, hair follicles and kidney. Basement membranes of the collecting tubules of kidney and pancreas.

Its subcellular location is the secreted. The protein resides in the extracellular space. It is found in the extracellular matrix. The protein localises to the basement membrane. Its function is as follows. Binding to cells via a high affinity receptor, laminin is thought to mediate the attachment, migration and organization of cells into tissues during embryonic development by interacting with other extracellular matrix components. The protein is Laminin subunit gamma-2 (Lamc2) of Mus musculus (Mouse).